The following is a 647-amino-acid chain: DNA mismatch repair protein MutL (647 aa).

The protein belongs to the DNA mismatch repair MutL/HexB family.

In terms of biological role, this protein is involved in the repair of mismatches in DNA. It is required for dam-dependent methyl-directed DNA mismatch repair. May act as a 'molecular matchmaker', a protein that promotes the formation of a stable complex between two or more DNA-binding proteins in an ATP-dependent manner without itself being part of a final effector complex. This is DNA mismatch repair protein MutL from Bacillus cereus (strain 03BB102).